We begin with the raw amino-acid sequence, 339 residues long: Formyl peptide receptor-related sequence 6 (339 aa).

Topologically, residues 1 to 23 (MEANFSIPQNGSEVVFYDSTTSR) are extracellular. Residues Asn4 and Asn10 are each glycosylated (N-linked (GlcNAc...) asparagine). A helical membrane pass occupies residues 24-44 (VICIFLVVVLSITFLLGVIGN). Residues 45-62 (GLVIYVAGFRMTHTVTTI) lie on the Cytoplasmic side of the membrane. Residues 63–85 (CYLNLALSDFSYMASLPFQITSI) traverse the membrane as a helical segment. Over 86–99 (VMNGEWLFGWFLCK) the chain is Extracellular. Cys98 and Cys178 are disulfide-bonded. A helical transmembrane segment spans residues 100–120 (FVHMIINVNLFLSIFLITFIA). Residues 121-144 (MDRCICVLHPVWAQNHRTVNVATK) lie on the Cytoplasmic side of the membrane. A helical membrane pass occupies residues 145-165 (VIFGAWILVLMLIFPHCIFVT). Residues 166–198 (TVKDESGKVHCICNFESWAATPEEQVKVSMTVS) lie on the Extracellular side of the membrane. The helical transmembrane segment at 199–219 (LISVTISFIIGFSIPMIFIVI) threads the bilayer. Residues 220-241 (CYGLMAAKIGRRGFVNSSRPLR) lie on the Cytoplasmic side of the membrane. The chain crosses the membrane as a helical span at residues 242 to 262 (VLTAVAISFFVCWFPFQLIFL). Topologically, residues 263–280 (LGNIGNKETQNNIDTWVN) are extracellular. The chain crosses the membrane as a helical span at residues 281 to 301 (TASTLASFNSCLNPILYVFLG). Residues 302 to 339 (QQFRERLIYSLSASLERALREDSALNSDKTRNLSSQRL) are Cytoplasmic-facing.

It belongs to the G-protein coupled receptor 1 family. As to expression, expressed exclusively in vomeronasal tissue. Expressed in 1.2 % of a subset of sensory neurons located in the apical layer of the vomeronasal organ. Each neuron appears to express only one receptor gene. Expressed in brain, spleen, skeletal muscle and at high level in testis.

It is found in the membrane. Functionally, may have an olfactory function associated with the identification of pathogens or of pathogenic states. This chain is Formyl peptide receptor-related sequence 6 (Fpr-rs6), found in Mus musculus (Mouse).